The following is a 392-amino-acid chain: Protein FAM53C (392 aa).

At M1 the chain carries N-acetylmethionine. A disordered region spans residues 77–120 (HLRPPSRGSSPKEQPLSQVLRPEPPDPEKLPVPPAPPSKRHCRS). A compositionally biased stretch (polar residues) spans 83–93 (RGSSPKEQPLS). 2 positions are modified to phosphoserine: S122 and S162. 3 disordered regions span residues 141-167 (LWTP…PKRV), 203-303 (SRPC…LDFD), and 340-364 (SASC…EGAV). Over residues 203–215 (SRPCATSPQSGSW) the composition is skewed to polar residues. 5 positions are modified to phosphoserine: S232, S234, S255, S273, and S299. Residues 241-256 (ASRFLPSARSSPASSP) show a composition bias toward low complexity. The segment covering 278-303 (LDARKTGVKRRHEEDPRRLRPSLDFD) has biased composition (basic and acidic residues).

This sequence belongs to the FAM53 family.

The protein is Protein FAM53C of Pongo abelii (Sumatran orangutan).